The following is a 71-amino-acid chain: Disintegrin applaggin (71 aa).

A Disintegrin domain is found at 1–71 (EAGEECDCGS…SAGCPRNPFH (71 aa)). 6 cysteine pairs are disulfide-bonded: cysteine 6–cysteine 21, cysteine 8–cysteine 16, cysteine 15–cysteine 38, cysteine 29–cysteine 35, cysteine 34–cysteine 58, and cysteine 47–cysteine 65. The Cell attachment site signature appears at 50–52 (RGD).

This sequence belongs to the venom metalloproteinase (M12B) family. P-II subfamily. P-IIa sub-subfamily. As to quaternary structure, monomer (disintegrin). Expressed by the venom gland.

It is found in the secreted. Its function is as follows. Inhibits fibrinogen interaction with platelets. Acts by binding to alpha-IIb/beta-3 (ITGA2B/ITGB3) on the platelet surface and inhibits aggregation induced by ADP, thrombin, platelet-activating factor and collagen. In Agkistrodon piscivorus piscivorus (Eastern cottonmouth), this protein is Disintegrin applaggin.